Reading from the N-terminus, the 492-residue chain is N-succinylglutamate 5-semialdehyde dehydrogenase (492 aa).

220-225 (GSASTG) contributes to the NAD(+) binding site. Catalysis depends on residues Glu243 and Cys277.

It belongs to the aldehyde dehydrogenase family. AstD subfamily.

The enzyme catalyses N-succinyl-L-glutamate 5-semialdehyde + NAD(+) + H2O = N-succinyl-L-glutamate + NADH + 2 H(+). The protein operates within amino-acid degradation; L-arginine degradation via AST pathway; L-glutamate and succinate from L-arginine: step 4/5. In terms of biological role, catalyzes the NAD-dependent reduction of succinylglutamate semialdehyde into succinylglutamate. In Salmonella heidelberg (strain SL476), this protein is N-succinylglutamate 5-semialdehyde dehydrogenase.